Here is a 331-residue protein sequence, read N- to C-terminus: Phosphoribosylformylglycinamidine cyclo-ligase (331 aa).

The protein belongs to the AIR synthase family.

Its subcellular location is the cytoplasm. The catalysed reaction is 2-formamido-N(1)-(5-O-phospho-beta-D-ribosyl)acetamidine + ATP = 5-amino-1-(5-phospho-beta-D-ribosyl)imidazole + ADP + phosphate + H(+). It functions in the pathway purine metabolism; IMP biosynthesis via de novo pathway; 5-amino-1-(5-phospho-D-ribosyl)imidazole from N(2)-formyl-N(1)-(5-phospho-D-ribosyl)glycinamide: step 2/2. In Clostridium botulinum (strain ATCC 19397 / Type A), this protein is Phosphoribosylformylglycinamidine cyclo-ligase.